Consider the following 204-residue polypeptide: Dof zinc finger protein DOF3.1 (204 aa).

Positions 1–25 (MQDPAAYYQTMMAKQQQQQQPQFAE) are disordered. The Dof-type zinc-finger motif lies at 29-83 (LKCPRCDSPNTKFCYYNNYNLSQPRHFCKSCRRYWTKGGALRNVPVGGGSRKNAT). Zn(2+) contacts are provided by Cys-31, Cys-34, Cys-56, and Cys-59. Disordered regions lie at residues 70–128 (RNVP…TRML) and 182–204 (RTEPGNNNNNPWTDLAMNRAEKN). The span at 84–102 (KRSTSSSSSASSPSNSSQN) shows a compositional bias: low complexity. A compositionally biased stretch (basic and acidic residues) spans 106–124 (KNPDPDPDPRNSQKPDLDP).

The protein localises to the nucleus. Transcription factor that binds specifically to a 5'-AA[AG]G-3' consensus core sequence. The sequence is that of Dof zinc finger protein DOF3.1 (DOF3.1) from Arabidopsis thaliana (Mouse-ear cress).